Consider the following 673-residue polypeptide: MDRSWAERRIPELIETIRHHEYLYYVKNEPEISDAAFDELMQELKQLEEAFPDLRRPDSPTQRVGGATAPDFAKVPHQPPMYSLDNAFSEADLRDFDRRVREGLGGEPVSYVCELKIDGLSISLRYEDGLFVQGATRGDGETGEDVTENLRTIGSIPLRLDGTEAPVPPRLIVRGEVYMTKQVLEELNAALAAEGKPLLQNPRNAAAGGLRQKDPRKTRERRLDAFLYQVVDAEALGIADHWSALQRLQAWRFKVNPHRHLAHTIDEVLDWVAGWQARRHELPYEIDGLVIKVNDLAQQRRLGFTSKFPRWAIAYKFPAEERETTVVGISLEVGRTGVVTPSADLAPVRIAGTTVKRATLHNEDYIREKDIRVGDTVIVRKAGEIIPEVVRVVPEKRPPDAQPWTFPKTCPACGAELVRIEGEAATRCTNNLCPAQQYRAILHFASRDAMNIEGLGEALVQSLLDHGLIEDAADLYRLHEKRDALIRLERMGEKSVDNLLAAIDATRQNPLHRLIFALGIRHVGERAARLLADHFGSMEAIEQAGLDELTAIPGLGPKIAESVKNYFASPRSHQLLAKLRAAGVNMVGEKKAGPAEGPLAGMTVVVTGTLVRWSRKEIEELIQQLGGKAAGSVSRKTSFVVAGEAAGSKLQKAQELGIPVLTEDEFCERYLQG.

34-38 (DAAFD) contacts NAD(+). Positions 54–73 (LRRPDSPTQRVGGATAPDFA) are disordered. NAD(+) contacts are provided by residues 83-84 (SL) and Glu-114. Lys-116 acts as the N6-AMP-lysine intermediate in catalysis. NAD(+) contacts are provided by Arg-137, Glu-176, Lys-292, and Lys-316. Residues Cys-410, Cys-413, Cys-428, and Cys-433 each contribute to the Zn(2+) site. The 80-residue stretch at 594–673 (PAEGPLAGMT…DEFCERYLQG (80 aa)) folds into the BRCT domain.

The protein belongs to the NAD-dependent DNA ligase family. LigA subfamily. Requires Mg(2+) as cofactor. The cofactor is Mn(2+).

The catalysed reaction is NAD(+) + (deoxyribonucleotide)n-3'-hydroxyl + 5'-phospho-(deoxyribonucleotide)m = (deoxyribonucleotide)n+m + AMP + beta-nicotinamide D-nucleotide.. In terms of biological role, DNA ligase that catalyzes the formation of phosphodiester linkages between 5'-phosphoryl and 3'-hydroxyl groups in double-stranded DNA using NAD as a coenzyme and as the energy source for the reaction. It is essential for DNA replication and repair of damaged DNA. This chain is DNA ligase, found in Symbiobacterium thermophilum (strain DSM 24528 / JCM 14929 / IAM 14863 / T).